The primary structure comprises 524 residues: Beta-glucosidase 22 (524 aa).

The N-terminal stretch at 1–24 (MALQKFPLLGLLFLITIVVSSTIA) is a signal peptide. A beta-D-glucoside is bound at residue glutamine 55. A glycan (N-linked (GlcNAc...) asparagine) is linked at asparagine 61. Residues histidine 158 and 203–204 (NE) each bind a beta-D-glucoside. The active-site Proton donor is the glutamate 204. The cysteines at positions 223 and 230 are disulfide-linked. Residues tyrosine 346, glutamate 418, tryptophan 468, 475-476 (EW), and phenylalanine 484 contribute to the a beta-D-glucoside site. Glutamate 418 serves as the catalytic Nucleophile. Residue asparagine 494 is glycosylated (N-linked (GlcNAc...) asparagine). A Prevents secretion from ER motif is present at residues 521–524 (KDEL).

The protein belongs to the glycosyl hydrolase 1 family. As to quaternary structure, component of the PYK10 complex, at least composed of PYK10/BGLU23, BGLU21, BGLU22, JAL22, JAL23, PBP1/JAL30, PBP2/JAL31, JAL32, JAL33, JAL34, JAL35, GLL22 and GLL23. In terms of tissue distribution, expressed exclusively in roots.

The protein resides in the endoplasmic reticulum lumen. The catalysed reaction is Hydrolysis of terminal, non-reducing beta-D-glucosyl residues with release of beta-D-glucose.. Its activity is regulated as follows. Activated upon binding to PBP1 or PBP2. Beta-D-glucosidase active on scopolin &gt;&gt; esculin &gt;&gt; 4-MU-glucoside. No activity with DIMBOA-glucoside, pNP-glucoside, oNP-glucoside and sinigrin as substrates. This Arabidopsis thaliana (Mouse-ear cress) protein is Beta-glucosidase 22.